Consider the following 117-residue polypeptide: Glutamine-rich protein (117 aa).

The segment covering 27–72 (RQQFQQQQQQQRQPQLQQQQQQQGIQQQPQGLQHQQQQFGLTQQHG) has biased composition (low complexity). Residues 27–88 (RQQFQQQQQQ…IVQPNPASQN (62 aa)) form a disordered region. The span at 75 to 87 (RRQNIVQPNPASQ) shows a compositional bias: polar residues.

As to expression, component of the acid-soluble and acid-insoluble organic matrix of calcified shell layers (at protein level).

The protein resides in the secreted. The chain is Glutamine-rich protein from Haliotis asinina (Donkey's ear abalone).